The following is a 342-amino-acid chain: L-threonine 3-dehydrogenase (342 aa).

Cys-38 lines the Zn(2+) pocket. Catalysis depends on charge relay system residues Thr-40 and His-43. Zn(2+) contacts are provided by His-63, Glu-64, Cys-93, Cys-96, Cys-99, and Cys-107. Residues Ile-175, Asp-195, Arg-200, 262–264 (LGI), and 286–287 (IY) each bind NAD(+).

It belongs to the zinc-containing alcohol dehydrogenase family. In terms of assembly, homotetramer. Requires Zn(2+) as cofactor.

The protein localises to the cytoplasm. It carries out the reaction L-threonine + NAD(+) = (2S)-2-amino-3-oxobutanoate + NADH + H(+). The protein operates within amino-acid degradation; L-threonine degradation via oxydo-reductase pathway; glycine from L-threonine: step 1/2. In terms of biological role, catalyzes the NAD(+)-dependent oxidation of L-threonine to 2-amino-3-ketobutyrate. The chain is L-threonine 3-dehydrogenase from Burkholderia vietnamiensis (strain G4 / LMG 22486) (Burkholderia cepacia (strain R1808)).